The chain runs to 208 residues: Small ribosomal subunit protein uS4 (208 aa).

The 66-residue stretch at 98 to 163 (RRLDNVVYRL…KPRFIEIKEK (66 aa)) folds into the S4 RNA-binding domain.

It belongs to the universal ribosomal protein uS4 family. In terms of assembly, part of the 30S ribosomal subunit. Contacts protein S5. The interaction surface between S4 and S5 is involved in control of translational fidelity.

One of the primary rRNA binding proteins, it binds directly to 16S rRNA where it nucleates assembly of the body of the 30S subunit. Its function is as follows. With S5 and S12 plays an important role in translational accuracy. This chain is Small ribosomal subunit protein uS4, found in Caldicellulosiruptor saccharolyticus (strain ATCC 43494 / DSM 8903 / Tp8T 6331).